Reading from the N-terminus, the 195-residue chain is ATP-dependent Clp protease proteolytic subunit (195 aa).

The active-site Nucleophile is S98. H123 is a catalytic residue.

The protein belongs to the peptidase S14 family. Fourteen ClpP subunits assemble into 2 heptameric rings which stack back to back to give a disk-like structure with a central cavity, resembling the structure of eukaryotic proteasomes.

Its subcellular location is the cytoplasm. The enzyme catalyses Hydrolysis of proteins to small peptides in the presence of ATP and magnesium. alpha-casein is the usual test substrate. In the absence of ATP, only oligopeptides shorter than five residues are hydrolyzed (such as succinyl-Leu-Tyr-|-NHMec, and Leu-Tyr-Leu-|-Tyr-Trp, in which cleavage of the -Tyr-|-Leu- and -Tyr-|-Trp bonds also occurs).. Cleaves peptides in various proteins in a process that requires ATP hydrolysis. Has a chymotrypsin-like activity. Plays a major role in the degradation of misfolded proteins. The polypeptide is ATP-dependent Clp protease proteolytic subunit (Helicobacter pylori (strain J99 / ATCC 700824) (Campylobacter pylori J99)).